We begin with the raw amino-acid sequence, 49 residues long: Small ribosomal subunit protein eS31 (49 aa).

The Zn(2+) site is built by C21, C24, C39, and C42. The C4-type zinc-finger motif lies at 21-42 (CPRCGPGVFLADHKNRLACGKC).

Belongs to the eukaryotic ribosomal protein eS31 family. In terms of assembly, part of the 30S ribosomal subunit. It depends on Zn(2+) as a cofactor.

The sequence is that of Small ribosomal subunit protein eS31 from Methanosarcina mazei (strain ATCC BAA-159 / DSM 3647 / Goe1 / Go1 / JCM 11833 / OCM 88) (Methanosarcina frisia).